The sequence spans 170 residues: MNLKEFVVDVKDFPKQGIVFKDITPLLNNKDAFKYTIDQMADFIKQLDVDVVVAPEARGFLLASAVAYAANKRFVLVRKPNKLPREVYDVEYSLEYGTNHQQIHVGDLKPNDKVVVIDDVLATGGTMQAIIDLVKLSKAEVIGMSFLIDLTFLHDVNLFDQYKVQKLIKY.

This sequence belongs to the purine/pyrimidine phosphoribosyltransferase family. Homodimer.

Its subcellular location is the cytoplasm. It carries out the reaction AMP + diphosphate = 5-phospho-alpha-D-ribose 1-diphosphate + adenine. The protein operates within purine metabolism; AMP biosynthesis via salvage pathway; AMP from adenine: step 1/1. In terms of biological role, catalyzes a salvage reaction resulting in the formation of AMP, that is energically less costly than de novo synthesis. This is Adenine phosphoribosyltransferase from Mycoplasma mycoides subsp. mycoides SC (strain CCUG 32753 / NCTC 10114 / PG1).